Consider the following 793-residue polypeptide: DnaJ homolog subfamily C member 10 (793 aa).

The N-terminal stretch at 1-32 (MGVWLNKDDYIRDLKRIILCFLIVYMAILVGT) is a signal peptide. Positions 35–100 (DFYSLLGVSK…DLRKKYDKYG (66 aa)) constitute a J domain. Residues 130-232 (EIITLERREF…ESLVSFAMQH (103 aa)) enclose the Thioredoxin 1 domain. An intrachain disulfide couples C158 to C161. 2 trxb regions span residues 235 to 350 (STVT…LPDF) and 348 to 463 (PDFE…PQNF). Thioredoxin domains follow at residues 454–553 (HVTT…IEDL), 557–662 (SVVS…SLRI), and 671–778 (VSTD…ISEK). Residues C480 and C483 are joined by a disulfide bond. The N-linked (GlcNAc...) asparagine glycan is linked to N530. Intrachain disulfides connect C588-C591 and C700-C703. The short motif at 790–793 (KDEL) is the Prevents secretion from ER element.

In terms of assembly, interacts with EDEM1. Interacts with HSPA5 (via its J domain).

The protein resides in the endoplasmic reticulum lumen. Endoplasmic reticulum disulfide reductase involved both in the correct folding of proteins and degradation of misfolded proteins. Required for efficient folding of proteins in the endoplasmic reticulum by catalyzing the removal of non-native disulfide bonds formed during the folding of proteins, such as LDLR. Also involved in endoplasmic reticulum-associated degradation (ERAD) by reducing incorrect disulfide bonds in misfolded glycoproteins recognized by EDEM1. Interaction with HSPA5 is required its activity, not for the disulfide reductase activity, but to facilitate the release of DNAJC10 from its substrate. Promotes apoptotic signaling pathway in response to endoplasmic reticulum stress. In Homo sapiens (Human), this protein is DnaJ homolog subfamily C member 10 (DNAJC10).